Consider the following 274-residue polypeptide: Nickel/cobalt efflux system RcnA (274 aa).

Over 1–12 (MTEFTTLLQQGN) the chain is Periplasmic. A helical transmembrane segment spans residues 13 to 33 (AWFFIPSAILLGALHGLEPGH). Residues 34 to 56 (SKTMMAAFIIAIKGTIKQAVMLG) are Cytoplasmic-facing. Residues 57–77 (LAATISHTAVVWLIAFGGMVI) traverse the membrane as a helical segment. Residues 78–86 (SKRFTAQSA) are Periplasmic-facing. The helical transmembrane segment at 87–107 (EPWLQLISAVIIISTAFWMFW) threads the bilayer. The Cytoplasmic portion of the chain corresponds to 108–174 (RTWRGERNWL…FDGREVTNWQ (67 aa)). Over residues 127 to 137 (HHHHDHEDHHD) the composition is skewed to basic and acidic residues. Positions 127 to 153 (HHHHDHEDHHDHGHHHHHEHGEYQDAH) are disordered. A helical membrane pass occupies residues 175–195 (ILLFGLTGGLIPCPAAITVLL). Residues 196–209 (ICIQLKALTLGATL) are Periplasmic-facing. The chain crosses the membrane as a helical span at residues 210–230 (VVSFSLGLALTLVTVSVGAAI). Residues 231-251 (SVQQVAKRWSGFNTLAKRAPY) lie on the Cytoplasmic side of the membrane. A helical transmembrane segment spans residues 252–272 (FSSLLIGLVGVYMGVHGFMGI). The Periplasmic segment spans residues 273 to 274 (MR).

The protein belongs to the NiCoT transporter (TC 2.A.52) family. RcnA subfamily.

It localises to the cell inner membrane. Efflux system for nickel and cobalt. The protein is Nickel/cobalt efflux system RcnA (rcnA) of Escherichia coli O6:K15:H31 (strain 536 / UPEC).